The following is a 179-amino-acid chain: Macro domain-containing protein XAC3343 (179 aa).

The region spanning 1–175 is the Macro domain; the sequence is MRIEVWQGDI…AYQQALATQE (175 aa).

Belongs to the MacroD-type family.

The chain is Macro domain-containing protein XAC3343 from Xanthomonas axonopodis pv. citri (strain 306).